A 375-amino-acid chain; its full sequence is Trichodiene synthase (375 aa).

This sequence belongs to the trichodiene synthase family.

It carries out the reaction (2E,6E)-farnesyl diphosphate = trichodiene + diphosphate. It functions in the pathway sesquiterpene biosynthesis; trichothecene biosynthesis. Its function is as follows. TS is a member of the terpene cyclase group of enzymes. It catalyzes the isomerization and cyclization of farnesyl pyro-phosphate to form trichodiene, the first cyclic intermediate in the biosynthetic pathway for trichothecenes. It serves to branch trichothecene biosynthesis from the isoprenoid pathway. The sequence is that of Trichodiene synthase (TRI5) from Fusarium pseudograminearum (Wheat and barley crown-rot fungus).